The following is a 259-amino-acid chain: Bidirectional sugar transporter SWEET4 (259 aa).

The Extracellular segment spans residues 1–10; it reads MVSPDTIRTA. Positions 10–94 constitute a MtN3/slv 1 domain; that stretch reads AIGVVGNGTA…TYIALFLAFS (85 aa). A helical membrane pass occupies residues 11-31; that stretch reads IGVVGNGTALVLFLSPVPTFI. The Cytoplasmic portion of the chain corresponds to 32–44; that stretch reads RIWKKGSVEQYSA. A helical membrane pass occupies residues 45–65; that stretch reads VPYVATLLNCMMWVLYGLPAV. Over 66–77 the chain is Extracellular; that stretch reads HPHSMLVITING. N-linked (GlcNAc...) asparagine glycosylation is present at asparagine 76. A helical transmembrane segment spans residues 78 to 98; sequence TGMAIELTYIALFLAFSLGAV. Topologically, residues 99-101 are cytoplasmic; the sequence is RRR. The helical transmembrane segment at 102–122 threads the bilayer; the sequence is VLLLLAAEVAFVAAVAALVLN. Residues 123-131 are Extracellular-facing; that stretch reads LAHTHERRS. The chain crosses the membrane as a helical span at residues 132–152; sequence MIVGILCVLFGTGMYAAPLSV. Positions 133 to 217 constitute a MtN3/slv 2 domain; that stretch reads IVGILCVLFG…ILYAIYYKST (85 aa). The Cytoplasmic portion of the chain corresponds to 153–165; it reads MKMVIQTKSVEYM. Residues 166–186 form a helical membrane-spanning segment; sequence PLFLSLASLVNGICWTAYALI. The Extracellular portion of the chain corresponds to 187 to 191; the sequence is RFDLY. A helical transmembrane segment spans residues 192 to 212; it reads ITIPNGLGVMFAVAQLILYAI. Topologically, residues 213–259 are cytoplasmic; that stretch reads YYKSTQQIIEARKRKEADHVAMTDVVVDSAKNNPSSGAAAAAANGRY.

Belongs to the SWEET sugar transporter family. As to quaternary structure, forms homooligomers and/or heterooligomers.

The protein localises to the cell membrane. Functionally, mediates both low-affinity uptake and efflux of sugar across the plasma membrane. This is Bidirectional sugar transporter SWEET4 (SWEET4) from Oryza sativa subsp. indica (Rice).